A 393-amino-acid chain; its full sequence is Formate-dependent phosphoribosylglycinamide formyltransferase (393 aa).

Residues E22 to L23 and E82 each bind N(1)-(5-phospho-beta-D-ribosyl)glycinamide. Residues R114, K155, S160–Q165, E195–I198, and E203 each bind ATP. One can recognise an ATP-grasp domain in the interval R119–L308. Mg(2+) contacts are provided by E267 and E279. N(1)-(5-phospho-beta-D-ribosyl)glycinamide-binding positions include D286, K356, and R363 to R364.

The protein belongs to the PurK/PurT family. Homodimer.

It carries out the reaction N(1)-(5-phospho-beta-D-ribosyl)glycinamide + formate + ATP = N(2)-formyl-N(1)-(5-phospho-beta-D-ribosyl)glycinamide + ADP + phosphate + H(+). It functions in the pathway purine metabolism; IMP biosynthesis via de novo pathway; N(2)-formyl-N(1)-(5-phospho-D-ribosyl)glycinamide from N(1)-(5-phospho-D-ribosyl)glycinamide (formate route): step 1/1. In terms of biological role, involved in the de novo purine biosynthesis. Catalyzes the transfer of formate to 5-phospho-ribosyl-glycinamide (GAR), producing 5-phospho-ribosyl-N-formylglycinamide (FGAR). Formate is provided by PurU via hydrolysis of 10-formyl-tetrahydrofolate. This Azotobacter vinelandii (strain DJ / ATCC BAA-1303) protein is Formate-dependent phosphoribosylglycinamide formyltransferase.